The following is a 945-amino-acid chain: Argonaute protein wago-1 (945 aa).

The span at 1–20 shows a compositional bias: pro residues; it reads MSPHPPQPHPPMPPMPPVTA. The interval 1 to 41 is disordered; that stretch reads MSPHPPQPHPPMPPMPPVTAPPGAMTPMPPVPADAQKLHQS. A PAZ domain is found at 322 to 432; it reads TVIQKLFDIT…FPAELMTVSR (111 aa). The Piwi domain occupies 636 to 899; sequence VKDGKRLTLE…PLYVANEYAK (264 aa).

This sequence belongs to the Argonaute family. WAGO subfamily. In terms of assembly, interacts with rde-12. Interacts with znfx-1. In terms of tissue distribution, enriched in sperm and oocytes.

The protein localises to the cytoplasmic granule. In terms of biological role, argonaute protein which is involved in the endogenous small interfering RNA (endo-siRNA) pathway. Interacts with secondary 22G-RNAs, which are RNA-dependent RNA polymerase-derived endo-siRNAs, typically 22 nucleotides in length with a 5'guanosine residue. In the germline, functions in a genome surveillance system to silence transposons and aberrant transcripts. The polypeptide is Argonaute protein wago-1 (Caenorhabditis elegans).